The chain runs to 193 residues: Penicillin-binding protein activator LpoB (193 aa).

Positions 1-16 are cleaved as a signal peptide; it reads MKKYLGVILAALVLTG. Cys-17 carries the N-palmitoyl cysteine lipid modification. The S-diacylglycerol cysteine moiety is linked to residue Cys-17. The tract at residues 17-55 is disordered; the sequence is CPSRPPEPTEPPATIEPVEPQVPTTPTLPPGESVPQPPK. Over residues 28–41 the composition is skewed to low complexity; sequence PATIEPVEPQVPTT.

The protein belongs to the LpoB family. As to quaternary structure, interacts with PBP1b.

Its subcellular location is the cell outer membrane. Regulator of peptidoglycan synthesis that is essential for the function of penicillin-binding protein 1B (PBP1b). This Pectobacterium carotovorum subsp. carotovorum (strain PC1) protein is Penicillin-binding protein activator LpoB.